A 120-amino-acid chain; its full sequence is Small ribosomal subunit protein bS6 (120 aa).

Polar residues predominate over residues 97–112; that stretch reads SNEPSPILKNQSTENT. The tract at residues 97-120 is disordered; it reads SNEPSPILKNQSTENTPVIDVTAN.

Belongs to the bacterial ribosomal protein bS6 family.

Binds together with bS18 to 16S ribosomal RNA. This is Small ribosomal subunit protein bS6 from Rickettsia bellii (strain OSU 85-389).